Reading from the N-terminus, the 22-residue chain is C-type natriuretic peptide (22 aa).

An intrachain disulfide couples C6 to C22.

Belongs to the natriuretic peptide family.

Its subcellular location is the secreted. In terms of biological role, hormone which plays a role in endochondral ossification through regulation of cartilaginous growth plate chondrocytes proliferation and differentiation. May also be vasoactive and natriuretic. Specifically binds and stimulates the cGMP production of the NPR2 receptor. Binds the clearance receptor NPR3. This chain is C-type natriuretic peptide (NPPC), found in Gallus gallus (Chicken).